The primary structure comprises 329 residues: GTP 3',8-cyclase (329 aa).

The Radical SAM core domain maps to 8 to 234 (AFARKFYYLR…QIRQRSDGPA (227 aa)). GTP is bound at residue arginine 17. 2 residues coordinate [4Fe-4S] cluster: cysteine 24 and cysteine 28. Residue tyrosine 30 coordinates S-adenosyl-L-methionine. Residue cysteine 31 coordinates [4Fe-4S] cluster. Residue arginine 68 participates in GTP binding. Glycine 72 is an S-adenosyl-L-methionine binding site. Threonine 99 contributes to the GTP binding site. Serine 123 lines the S-adenosyl-L-methionine pocket. Lysine 160 is a GTP binding site. Methionine 194 serves as a coordination point for S-adenosyl-L-methionine. Residues cysteine 257 and cysteine 260 each contribute to the [4Fe-4S] cluster site. 262–264 (RLR) serves as a coordination point for GTP. Residue cysteine 274 coordinates [4Fe-4S] cluster.

The protein belongs to the radical SAM superfamily. MoaA family. As to quaternary structure, monomer and homodimer. Requires [4Fe-4S] cluster as cofactor.

It carries out the reaction GTP + AH2 + S-adenosyl-L-methionine = (8S)-3',8-cyclo-7,8-dihydroguanosine 5'-triphosphate + 5'-deoxyadenosine + L-methionine + A + H(+). It functions in the pathway cofactor biosynthesis; molybdopterin biosynthesis. Functionally, catalyzes the cyclization of GTP to (8S)-3',8-cyclo-7,8-dihydroguanosine 5'-triphosphate. This chain is GTP 3',8-cyclase, found in Klebsiella pneumoniae subsp. pneumoniae (strain ATCC 700721 / MGH 78578).